Here is a 518-residue protein sequence, read N- to C-terminus: Zinc finger protein 449 (518 aa).

The region spanning 30–112 (RQRFRQFQYR…SLIEDLQREL (83 aa)) is the SCAN box domain. The segment covering 292–304 (NPTLGETPENSNL) has biased composition (polar residues). The segment at 292 to 325 (NPTLGETPENSNLEEPLNPKPHKKKSPGEKPHRC) is disordered. 7 consecutive C2H2-type zinc fingers follow at residues 323 to 345 (HRCP…QRIH), 351 to 373 (HKCP…QRLH), 379 to 401 (YECT…QRTH), 407 to 429 (YKCL…LKTH), 435 to 457 (HRCH…QRTH), 463 to 485 (FKCN…LRIH), and 491 to 513 (YKCT…QVTH).

The protein belongs to the krueppel C2H2-type zinc-finger protein family.

It localises to the nucleus. Functionally, may be involved in transcriptional regulation. This is Zinc finger protein 449 (ZNF449) from Gorilla gorilla gorilla (Western lowland gorilla).